The chain runs to 387 residues: Succinate--CoA ligase [ADP-forming] subunit beta (387 aa).

The 228-residue stretch at 9 to 236 folds into the ATP-grasp domain; the sequence is KELFAKHNVP…RDATDPLELK (228 aa). ATP is bound by residues K45, 52-54, S94, and E99; that span reads GRG. Mg(2+) contacts are provided by N191 and D205. Substrate contacts are provided by residues N256 and 318–320; that span reads GIT.

It belongs to the succinate/malate CoA ligase beta subunit family. As to quaternary structure, heterotetramer of two alpha and two beta subunits. The cofactor is Mg(2+).

The enzyme catalyses succinate + ATP + CoA = succinyl-CoA + ADP + phosphate. It carries out the reaction GTP + succinate + CoA = succinyl-CoA + GDP + phosphate. Its pathway is carbohydrate metabolism; tricarboxylic acid cycle; succinate from succinyl-CoA (ligase route): step 1/1. Succinyl-CoA synthetase functions in the citric acid cycle (TCA), coupling the hydrolysis of succinyl-CoA to the synthesis of either ATP or GTP and thus represents the only step of substrate-level phosphorylation in the TCA. The beta subunit provides nucleotide specificity of the enzyme and binds the substrate succinate, while the binding sites for coenzyme A and phosphate are found in the alpha subunit. This chain is Succinate--CoA ligase [ADP-forming] subunit beta, found in Mycobacterium sp. (strain JLS).